Here is a 196-residue protein sequence, read N- to C-terminus: SPRY domain-containing protein 7 (196 aa).

Residue Ala-2 is modified to N-acetylalanine. Positions 2 to 184 (ATSVLCCLRC…FSEFYHTPPP (183 aa)) constitute a B30.2/SPRY domain.

This is SPRY domain-containing protein 7 (SPRYD7) from Homo sapiens (Human).